The following is a 236-amino-acid chain: Osmoprotectant import permease protein OsmY (236 aa).

The next 6 helical transmembrane spans lie at 9 to 29 (VLGF…GIGL), 47 to 67 (LMLV…SGIL), 95 to 115 (VLAL…VALF), 126 to 146 (TYAG…GIGM), 180 to 200 (PLAF…GIYL), and 207 to 227 (ILGA…LAWF). An ABC transmembrane type-1 domain is found at 43 to 224 (GQRHLMLVFT…LFALILDTLL (182 aa)).

This sequence belongs to the binding-protein-dependent transport system permease family. The complex is composed of two ATP-binding proteins (OsmV), two transmembrane proteins (OsmW and OsmY) and a solute-binding protein (OsmX).

The protein resides in the cell inner membrane. Its function is as follows. Part of the OsmU ABC transporter complex, which is involved in the uptake of osmoprotectants such as choline-O-sulfate and glycine betaine. Probably responsible for the translocation of the substrate across the membrane. In Salmonella typhimurium (strain LT2 / SGSC1412 / ATCC 700720), this protein is Osmoprotectant import permease protein OsmY (osmY).